A 485-amino-acid polypeptide reads, in one-letter code: Cysteine--tRNA ligase (485 aa).

A Zn(2+)-binding site is contributed by C27. A 'HIGH' region motif is present at residues 29 to 39 (ITAYDLCHLGH). Residues C208, H233, and E237 each contribute to the Zn(2+) site. The 'KMSKS' region signature appears at 265-269 (KMSKS). Residue K268 coordinates ATP.

This sequence belongs to the class-I aminoacyl-tRNA synthetase family. In terms of assembly, monomer. Zn(2+) is required as a cofactor.

It is found in the cytoplasm. The enzyme catalyses tRNA(Cys) + L-cysteine + ATP = L-cysteinyl-tRNA(Cys) + AMP + diphosphate. This Oleidesulfovibrio alaskensis (strain ATCC BAA-1058 / DSM 17464 / G20) (Desulfovibrio alaskensis) protein is Cysteine--tRNA ligase.